Consider the following 311-residue polypeptide: Ornithine carbamoyltransferase (311 aa).

Carbamoyl phosphate-binding positions include 54 to 57, Gln81, Arg105, and 132 to 135; these read STRT and HPCQ. Residues Asn163, Asp221, and 225-226 each bind L-ornithine; that span reads SM. Carbamoyl phosphate-binding positions include 261–262 and Arg289; that span reads CL.

Belongs to the aspartate/ornithine carbamoyltransferase superfamily. OTCase family.

The protein resides in the cytoplasm. It carries out the reaction carbamoyl phosphate + L-ornithine = L-citrulline + phosphate + H(+). It functions in the pathway amino-acid degradation; L-arginine degradation via ADI pathway; carbamoyl phosphate from L-arginine: step 2/2. In terms of biological role, reversibly catalyzes the transfer of the carbamoyl group from carbamoyl phosphate (CP) to the N(epsilon) atom of ornithine (ORN) to produce L-citrulline. This is Ornithine carbamoyltransferase from Azoarcus sp. (strain BH72).